The sequence spans 80 residues: Protein FAM229B (80 aa).

Residues 1–44 are disordered; sequence MPFRFGTQPRRFPVEGGDSSIGLEPGLSSSATCNGKEMSPTRQL.

This sequence belongs to the FAM229 family.

In Bos taurus (Bovine), this protein is Protein FAM229B (FAM229B).